Consider the following 566-residue polypeptide: MKTIIALSYIFCLVFAQDLPGNDNSTATLCLGHHAVPNGTLVKTITNDQIEVTNATELVQSSSTGKICDNPHRILDGINCTLIDALLGDPHCDGFQNEKWDLFVERSKAFSNCYPYDVPDYASLRSLVASSGTLEFINEGFNWTGVTQNGGSRACKRGPDNGFFSRLNWLYKSGSTYPVQNVTMPNNDNSDKLYIWGVHHPSTDKEQTDLYVQASGKVTVSTKRSQQTVIPNVGSRPWVRGLSSRVSIYWTIVKPGDILVINSNGNLIAPRGYFKMRTGKSSIMRSDAPIGTCSSECITPNGSIPNDKPFQNVNKITYGACPKYVKQNTLKLATGMRNVPEKQTRGIFGAIAGFIENGWEGMIDGWYGFRHQNSEGTGQAADLKSTQAAIDQINGKLNRVIEKTNEKFHQIEKEFSEVEGRIQDLEKYVEDTKIDLWSYNAELLVALENQHTIDLTDSEMNKLFEKTRRQLRENAEDMGNGCFKIYHKCDNACIGSIRNGTYDHDVYRDEALNNRFQIKGVELKSGYKDWILWISFAISCFLLCVVLLGFIMWACQKGNIRCNICI.

Residues 1–16 form the signal peptide; the sequence is MKTIIALSYIFCLVFA. Residues 17–530 lie on the Extracellular side of the membrane; the sequence is QDLPGNDNST…VELKSGYKDW (514 aa). Asparagine 24, asparagine 38, asparagine 54, and asparagine 79 each carry an N-linked (GlcNAc...) asparagine; by host glycan. Disulfide bonds link cysteine 30–cysteine 482, cysteine 68–cysteine 293, cysteine 80–cysteine 92, cysteine 113–cysteine 155, cysteine 297–cysteine 321, and cysteine 489–cysteine 493. N-linked (GlcNAc...) asparagine; by host glycans are attached at residues asparagine 142, asparagine 181, and asparagine 301. Asparagine 499 carries N-linked (GlcNAc...) asparagine; by host glycosylation. The helical transmembrane segment at 531 to 551 threads the bilayer; sequence ILWISFAISCFLLCVVLLGFI. At 552-566 the chain is on the cytoplasmic side; sequence MWACQKGNIRCNICI. Residues cysteine 555, cysteine 562, and cysteine 565 are each lipidated (S-palmitoyl cysteine; by host).

This sequence belongs to the influenza viruses hemagglutinin family. Homotrimer of disulfide-linked HA1-HA2. Post-translationally, palmitoylated. In natural infection, inactive HA is matured into HA1 and HA2 outside the cell by one or more trypsin-like, arginine-specific endoprotease secreted by the bronchial epithelial cells. One identified protease that may be involved in this process is secreted in lungs by club cells.

The protein localises to the virion membrane. It localises to the host apical cell membrane. Binds to sialic acid-containing receptors on the cell surface, bringing about the attachment of the virus particle to the cell. This attachment induces virion internalization either through clathrin-dependent endocytosis or through clathrin- and caveolin-independent pathway. Plays a major role in the determination of host range restriction and virulence. Class I viral fusion protein. Responsible for penetration of the virus into the cell cytoplasm by mediating the fusion of the membrane of the endocytosed virus particle with the endosomal membrane. Low pH in endosomes induces an irreversible conformational change in HA2, releasing the fusion hydrophobic peptide. Several trimers are required to form a competent fusion pore. In Influenza A virus (strain A/Memphis/110/1976 H3N2), this protein is Hemagglutinin.